Reading from the N-terminus, the 68-residue chain is Metallothionein (68 aa).

Belongs to the metallothionein superfamily. Type 4 family.

In terms of biological role, metallothioneins have a high content of cysteine residues that bind various heavy metals. The sequence is that of Metallothionein (MT1) from Lytechinus pictus (Painted sea urchin).